The following is a 314-amino-acid chain: Hydroxyacyl-coenzyme A dehydrogenase, mitochondrial (314 aa).

The N-terminal 12 residues, Met-1–Leu-12, are a transit peptide targeting the mitochondrion. Residues Gly-34 to Gly-39 and Asp-57 contribute to the NAD(+) site. Residues Ser-73 and Lys-80 each contribute to the CoA site. Lys-80 carries the N6-succinyllysine modification. N6-acetyllysine; alternate occurs at positions 81 and 87. 2 positions are modified to N6-succinyllysine; alternate: Lys-81 and Lys-87. Glu-122 contributes to the NAD(+) binding site. Lys-125 carries the post-translational modification N6-acetyllysine. Lys-127 contacts NAD(+). At Lys-127 the chain carries N6-(2-hydroxyisobutyryl)lysine. Residue Lys-136 is modified to N6-acetyllysine; alternate. The residue at position 136 (Lys-136) is an N6-succinyllysine; alternate. Residues Ser-149 and Asn-173 each contribute to the NAD(+) site. Ser-149 provides a ligand contact to CoA. At Lys-179 the chain carries N6-acetyllysine. Residues Lys-185, Lys-192, and Lys-202 each carry the N6-acetyllysine; alternate modification. Lys-185, Lys-192, and Lys-202 each carry N6-succinyllysine; alternate. N6-succinyllysine is present on Lys-206. 2 positions are modified to N6-acetyllysine; alternate: Lys-212 and Lys-241. Lys-212 and Lys-241 each carry N6-succinyllysine; alternate. NAD(+) is bound at residue Lys-305. The residue at position 312 (Lys-312) is an N6-acetyllysine; alternate. N6-succinyllysine; alternate is present on Lys-312.

This sequence belongs to the 3-hydroxyacyl-CoA dehydrogenase family. Homodimer. Interacts with GLUD1; this interaction inhibits the activation of glutamate dehydrogenase 1 (GLUD1). Post-translationally, succinylation at Lys-81, adjacent to a coenzyme A binding site. Desuccinylated by SIRT5.

It is found in the mitochondrion matrix. It catalyses the reaction a (3S)-3-hydroxyacyl-CoA + NAD(+) = a 3-oxoacyl-CoA + NADH + H(+). The catalysed reaction is (3S)-3-hydroxybutanoyl-CoA + NAD(+) = acetoacetyl-CoA + NADH + H(+). The enzyme catalyses (3S)-hydroxydecanoyl-CoA + NAD(+) = 3-oxodecanoyl-CoA + NADH + H(+). It carries out the reaction (3S)-hydroxyhexadecanoyl-CoA + NAD(+) = 3-oxohexadecanoyl-CoA + NADH + H(+). It functions in the pathway lipid metabolism; fatty acid beta-oxidation. Functionally, mitochondrial fatty acid beta-oxidation enzyme that catalyzes the third step of the beta-oxidation cycle for medium and short-chain 3-hydroxy fatty acyl-CoAs (C4 to C10). Plays a role in the control of insulin secretion by inhibiting the activation of glutamate dehydrogenase 1 (GLUD1), an enzyme that has an important role in regulating amino acid-induced insulin secretion. Plays a role in the maintenance of normal spermatogenesis through the reduction of fatty acid accumulation in the testes. The polypeptide is Hydroxyacyl-coenzyme A dehydrogenase, mitochondrial (HADH) (Sus scrofa (Pig)).